The following is a 928-amino-acid chain: Tyrosine-protein phosphatase 3 (928 aa).

Thr-75 is modified (phosphothreonine). Residues 111–232 form the Rhodanese domain; the sequence is PDEKVLLLDV…FKILFPDHIN (122 aa). The segment at 247-307 is disordered; it reads KSPKTNLMNS…PRNVLSDSPM (61 aa). Position 248 is a phosphoserine (Ser-248). 2 stretches are compositionally biased toward polar residues: residues 249 to 259 and 265 to 275; these read PKTNLMNSLHN and TATTPLSSPQM. Basic and acidic residues predominate over residues 280–289; it reads KVPDDSRSDH. The span at 290–307 shows a compositional bias: low complexity; sequence SNFSSSPSPRNVLSDSPM. Residues Ser-297 and Ser-368 each carry the phosphoserine modification. Disordered stretches follow at residues 467–487 and 672–713; these read LTST…NKVQ and MRKN…NNNN. The 377-residue stretch at 502 to 878 folds into the Tyrosine-protein phosphatase domain; that stretch reads YKSMLSLESD…IFIYDCLLFY (377 aa). The span at 672–691 shows a compositional bias: polar residues; the sequence is MRKNTMGTQNSSLYSAGVQG. Positions 692–713 are enriched in low complexity; it reads NSSNYSTDNDNDNDNNNNNNNN. The Phosphocysteine intermediate role is filled by Cys-804.

Belongs to the protein-tyrosine phosphatase family. Non-receptor class subfamily. Interacts with HOG1.

It localises to the cytoplasm. It carries out the reaction O-phospho-L-tyrosyl-[protein] + H2O = L-tyrosyl-[protein] + phosphate. In terms of biological role, major phosphatase responsible for tyrosine dephosphorylation of MAP kinases FUS3 and HOG1 to inactivate their activity; it also has important roles, along with MSG5, in the inactivation of FUS3 following pheromone stimulation. In Saccharomyces cerevisiae (strain ATCC 204508 / S288c) (Baker's yeast), this protein is Tyrosine-protein phosphatase 3 (PTP3).